A 264-amino-acid chain; its full sequence is MNNFASNDPLVIAGIVYSSRLLTGTGKFKDLDETRLATEAAGSQIVTVAIRRVNIGQDPHQPNLLNVLSPDRYTILPNTAGCYTAEDAVRTCRLARELLDGHRLTKLEVLGDKKTLYPDVVQTLKAAEQLVAEDFQVMVYTSDDPILAKRLEEIGCVAVMPLAAPIGSGLGVQNRYNLLEIIENAQVPIIVDAGVGTASDAAIAMELGCDAVLMNTAIAGARDPVLMASAMRKAVEAGREAFLAGRIPRKRYAAASSPVEGLVG.

Lys-106 acts as the Schiff-base intermediate with DXP in catalysis. 1-deoxy-D-xylulose 5-phosphate contacts are provided by residues Gly-167, 193–194, and 215–216; these read AG and NT.

Belongs to the ThiG family. As to quaternary structure, homotetramer. Forms heterodimers with either ThiH or ThiS.

The protein resides in the cytoplasm. The enzyme catalyses [ThiS sulfur-carrier protein]-C-terminal-Gly-aminoethanethioate + 2-iminoacetate + 1-deoxy-D-xylulose 5-phosphate = [ThiS sulfur-carrier protein]-C-terminal Gly-Gly + 2-[(2R,5Z)-2-carboxy-4-methylthiazol-5(2H)-ylidene]ethyl phosphate + 2 H2O + H(+). Its pathway is cofactor biosynthesis; thiamine diphosphate biosynthesis. In terms of biological role, catalyzes the rearrangement of 1-deoxy-D-xylulose 5-phosphate (DXP) to produce the thiazole phosphate moiety of thiamine. Sulfur is provided by the thiocarboxylate moiety of the carrier protein ThiS. In vitro, sulfur can be provided by H(2)S. The polypeptide is Thiazole synthase (Xylella fastidiosa (strain 9a5c)).